The following is a 340-amino-acid chain: tRNA N6-adenosine threonylcarbamoyltransferase (340 aa).

Residues histidine 111 and histidine 115 each contribute to the Fe cation site. Substrate is bound by residues valine 133–glycine 137, aspartate 166, glycine 179, aspartate 183, and asparagine 273. Aspartate 301 is a binding site for Fe cation.

This sequence belongs to the KAE1 / TsaD family. The cofactor is Fe(2+).

The protein resides in the cytoplasm. The enzyme catalyses L-threonylcarbamoyladenylate + adenosine(37) in tRNA = N(6)-L-threonylcarbamoyladenosine(37) in tRNA + AMP + H(+). Required for the formation of a threonylcarbamoyl group on adenosine at position 37 (t(6)A37) in tRNAs that read codons beginning with adenine. Is involved in the transfer of the threonylcarbamoyl moiety of threonylcarbamoyl-AMP (TC-AMP) to the N6 group of A37, together with TsaE and TsaB. TsaD likely plays a direct catalytic role in this reaction. In Pelobacter propionicus (strain DSM 2379 / NBRC 103807 / OttBd1), this protein is tRNA N6-adenosine threonylcarbamoyltransferase.